The chain runs to 614 residues: Selenocysteine-specific elongation factor (614 aa).

Residues 1–173 (MIIATAGHVD…LPEREHASQH (173 aa)) enclose the tr-type G domain. The segment at 7 to 14 (GHVDHGKT) is G1. 7-14 (GHVDHGKT) provides a ligand contact to GTP. The tract at residues 35–39 (GMTID) is G2. The tract at residues 57-60 (DVPG) is G3. Residues 57 to 61 (DVPGH) and 112 to 115 (TKAD) contribute to the GTP site. The segment at 112-115 (TKAD) is G4. The interval 147 to 149 (AAT) is G5.

This sequence belongs to the TRAFAC class translation factor GTPase superfamily. Classic translation factor GTPase family. SelB subfamily.

The protein resides in the cytoplasm. Translation factor necessary for the incorporation of selenocysteine into proteins. It probably replaces EF-Tu for the insertion of selenocysteine directed by the UGA codon. SelB binds GTP and GDP. The polypeptide is Selenocysteine-specific elongation factor (selB) (Escherichia coli (strain K12)).